Here is a 1939-residue protein sequence, read N- to C-terminus: Myosin-8 (1939 aa).

The Myosin N-terminal SH3-like domain occupies 35-84 (DAKTSVFVAEPKASYVKSTIQSKEGGKVTVKTEGGATLTVREDQVFPMNP). Residues T66 and T71 each carry the phosphothreonine modification. The 696-residue stretch at 88–783 (DKIEDMAMMT…LLGLLEEMRD (696 aa)) folds into the Myosin motor domain. Position 132 is an N6,N6,N6-trimethyllysine (K132). Residue 181–188 (GESGAGKT) coordinates ATP. Y391 is subject to Phosphotyrosine. Position 421 is a phosphothreonine (T421). Y426 is subject to Phosphotyrosine. At S627 the chain carries Phosphoserine. The tract at residues 660–682 (LNKLMTNLRSTHPHFVRCIIPNE) is actin-binding. Position 758 is a pros-methylhistidine (H758). Positions 762-776 (KFGHTKVFFKAGLLG) are actin-binding. The region spanning 783–815 (DEKLSQIITRTQAVCRGFLMRVEYQKMLQRREA) is the IQ domain. The stretch at 844 to 1939 (LLKSAETEKE…REVHTKISAE (1096 aa)) forms a coiled coil. S1093, S1097, S1163, and S1238 each carry phosphoserine. T1242 bears the Phosphothreonine mark. S1244 carries the post-translational modification Phosphoserine. T1256 is modified (phosphothreonine). Position 1262 is a phosphoserine (S1262). Phosphothreonine occurs at positions 1266 and 1287. 3 positions are modified to phosphoserine: S1293, S1304, and S1307. Position 1465 is a phosphotyrosine (Y1465). Phosphothreonine is present on T1468. S1475 carries the post-translational modification Phosphoserine. Y1493 bears the Phosphotyrosine mark. S1496 is modified (phosphoserine). Position 1502 is a phosphothreonine (T1502). S1515 is modified (phosphoserine). T1518 is modified (phosphothreonine). S1555, S1575, S1601, S1604, S1715, and S1727 each carry phosphoserine. T1731 is subject to Phosphothreonine. S1740 carries the post-translational modification Phosphoserine.

Belongs to the TRAFAC class myosin-kinesin ATPase superfamily. Myosin family. Muscle myosin is a hexameric protein that consists of 2 heavy chain subunits (MHC), 2 alkali light chain subunits (MLC) and 2 regulatory light chain subunits (MLC-2).

The protein localises to the cytoplasm. It localises to the myofibril. In terms of biological role, muscle contraction. The polypeptide is Myosin-8 (MYH8) (Canis lupus familiaris (Dog)).